Here is a 347-residue protein sequence, read N- to C-terminus: Pre-B-cell leukemia transcription factor 1 (347 aa).

Positions 1-37 (MDDQPRLMHSHPGVGMAGHPSLSQHMQDGTGANEGDV) are disordered. In terms of domain architecture, PBC spans 38 to 232 (GRKQDIGDIL…VMILRSRFLD (195 aa)). Residues 45-124 (DILQQIMTIT…EGVAGPEKGG (80 aa)) form a PBC-A region. The segment at 127-232 (AAAAAAAAAS…VMILRSRFLD (106 aa)) is PBC-B. A DNA-binding region (homeobox; TALE-type) is located at residues 233-295 (ARRKRRNFNK…NKRIRYKKNI (63 aa)). A compositionally biased stretch (polar residues) spans 318–331 (VHGSQANSPSTPSS). Residues 318–347 (VHGSQANSPSTPSSAGGYPSPCYQSDRRIQ) are disordered.

The protein belongs to the TALE/PBX homeobox family. As to quaternary structure, forms a heterodimer with isoform 2 of meis1; the interaction is necessary for neural fate induction. As to expression, shows broad, weak expression from blastula through gastrula stages. At stage 14/15, expressed in a broad arc that gives rise to the forebrain and eyes. More intensely expressed in the lateral neural folds (presumptive neural crest) and as horizontal stripes in the posterior neural plate that give rise to the hindbrain. As development proceeds, expression progresses posteriorly along the neural folds and at stage 21, expression is pronounced in the prospective hindbrain and in migratory neural crest cells. At later stages (stage 26), expression becomes intense within the dorsal portion of the forebrain, and in the optic cup, caudal branchial arch, peripheral to the pronephric anlage, and in the dorsal anterior half of the spinal cord. Expression remains robust in the hindbrain but gradually becomes more restricted. At stage 28, expressed in the dorsal lateral portion of the neural tube and in the somatic layer of the lateral plate mesoderm that surrounds the pronephric anlage.

The protein localises to the nucleus. Acts as a transcriptional activator in complex with isoform 2 of meis1, to induce posterior neural and neural crest gene expression, and thereby specify hindbrain and neural crest cell fate. Binds to a highly conserved region in the promoter of the neural crest gene zic3. Required for the nuclear transport or retention of isoform 2 of meis1. The chain is Pre-B-cell leukemia transcription factor 1 (pbx1) from Xenopus laevis (African clawed frog).